The sequence spans 218 residues: Small ribosomal subunit protein uS3 (218 aa).

Residues 38–106 (VREYINKRLQ…RVHINIVEIK (69 aa)) form the KH type-2 domain.

The protein belongs to the universal ribosomal protein uS3 family. Part of the 30S ribosomal subunit. Forms a tight complex with proteins S10 and S14.

Its function is as follows. Binds the lower part of the 30S subunit head. Binds mRNA in the 70S ribosome, positioning it for translation. This chain is Small ribosomal subunit protein uS3, found in Geobacillus thermodenitrificans (strain NG80-2).